Consider the following 945-residue polypeptide: Chaperone protein ClpD, chloroplastic (945 aa).

The transit peptide at 1–89 (MEVLSTSSPL…FERFTERAIR (89 aa)) directs the protein to the chloroplast. Repeat regions lie at residues 90–146 (AIIF…WDEA) and 168–233 (FSIS…LKGE). A Clp R domain is found at 90 to 233 (AIIFSQKEAK…AAALTRLKGE (144 aa)). A disordered region spans residues 233 to 264 (EIAKDGREPSSSSKGSFESPPSGRIAGSGPGG). A compositionally biased stretch (low complexity) spans 241-255 (PSSSSKGSFESPPSG). The tract at residues 271–523 (LEQFCVDLTA…RARIEAFRKK (253 aa)) is i. An ATP-binding site is contributed by 316–323 (GEAGVGKT). Positions 555 to 586 (SRQKQDDGDAISDESGELVEESSLPPAAGDDE) are disordered. The span at 562-574 (GDAISDESGELVE) shows a compositional bias: acidic residues. Positions 590–781 (VGPDDIAAVA…LIIMTSNVGS (192 aa)) are II. 664 to 671 (GPTGVGKT) contacts ATP.

Belongs to the ClpA/ClpB family. ClpD subfamily. As to quaternary structure, homodimer and homohexamer. Hexamerization upon addition of ATP. Interacts with CLPT1. Stably associated with the import machinery. Mg(2+) serves as cofactor. As to expression, expressed in stems and leaves.

The protein resides in the plastid. It localises to the chloroplast stroma. It catalyses the reaction ATP + H2O = ADP + phosphate + H(+). Its function is as follows. Molecular chaperone that interact with a ClpP-like protease involved in degradation of denatured proteins in the chloroplast. The ATPase activity of CLPD is stimulated by CLPT1. Has no ADPase activity. Interacts with transit peptides with a positional preference. Localization of the signal sequence at the N-terminal end of a protein seems mandatory for interaction to take place. This Arabidopsis thaliana (Mouse-ear cress) protein is Chaperone protein ClpD, chloroplastic.